A 184-amino-acid chain; its full sequence is Probable S-adenosyl-L-methionine-binding protein PYRAB06630 (184 aa).

Residues 9-140 (YRPIGIIHSP…YVPEFDVREN (132 aa)) form the TsaA-like domain. S-adenosyl-L-methionine contacts are provided by residues 26–28 (PIQ), 65–66 (HR), R89, and 120–123 (LDGT).

It belongs to the tRNA methyltransferase O family.

The polypeptide is Probable S-adenosyl-L-methionine-binding protein PYRAB06630 (Pyrococcus abyssi (strain GE5 / Orsay)).